The following is a 428-amino-acid chain: AP-1 complex subunit mu-2 (428 aa).

The region spanning 170-426 is the MHD domain; it reads KNEVFLDVIE…ITMAGEYELR (257 aa).

The protein belongs to the adaptor complexes medium subunit family. Adaptor protein complex 1 (AP-1) is a heterotetramer composed of two large adaptins (gamma-type subunit and beta-type subunit), a medium adaptin (mu-type subunit) and a small adaptin (sigma-type subunit). Ubiquitous.

It localises to the golgi apparatus. The protein resides in the trans-Golgi network membrane. It is found in the early endosome membrane. The protein localises to the cytoplasmic vesicle. Its subcellular location is the clathrin-coated vesicle membrane. In terms of biological role, subunit of clathrin-associated adaptor protein complex 1 that plays a role in protein sorting at the trans-Golgi network and early endosomes (TGN/EE). The AP complexes mediate the recruitment of clathrin to membranes and the recognition of sorting signals within the cytosolic tails of transmembrane cargo molecules. Required for KNOLLE localization at the cell plate to mediate cytokinesis. Functions redundantly with AP1M1 in multiple post-Golgi trafficking pathways leading from the TGN to the vacuole, the plasma membrane, and the cell-division plane. This is AP-1 complex subunit mu-2 (AP1M2) from Arabidopsis thaliana (Mouse-ear cress).